The primary structure comprises 512 residues: Gustatory and odorant receptor 63a (512 aa).

Residues 1–24 are disordered; it reads MRPSGEKVVKGHGQGNSGHSLSGM. Residues 1 to 129 are Cytoplasmic-facing; that stretch reads MRPSGEKVVK…PARAKFEMNS (129 aa). The helical transmembrane segment at 130–150 threads the bilayer; that stretch reads ASFIYSVVFFVLLACYVGYVA. The Extracellular segment spans residues 151–166; it reads NNRIHIVRSLSGPFEE. A helical membrane pass occupies residues 167–187; it reads AVIAYLFLVNILPIMIIPILW. Residues 188 to 222 are Cytoplasmic-facing; it reads YEARKIAKLFNDWDDFEVLYYQISGHSLPLKLRQK. The chain crosses the membrane as a helical span at residues 223 to 243; that stretch reads AVYIAIVLPILSVLSVVITHV. Over 244–265 the chain is Extracellular; the sequence is TMSDLNINQVVPYCILDNLTAM. N-linked (GlcNAc...) asparagine glycosylation occurs at Asn261. The helical transmembrane segment at 266 to 285 threads the bilayer; it reads LGAWWFLICEAMSITAHLLA. At 286 to 324 the chain is on the cytoplasmic side; sequence ERFQKALKHIGPAAMVADYRVLWLRLSKLTRDTGNALCY. Residues 325–345 traverse the membrane as a helical segment; that stretch reads TFVFMSLYLFFIITLSIYGLM. Residues 346–350 lie on the Extracellular side of the membrane; the sequence is SQLSE. The chain crosses the membrane as a helical span at residues 351–371; the sequence is GFGIKDIGLTITALWNIGLLF. Residues 372 to 436 lie on the Cytoplasmic side of the membrane; it reads YICDEAHYAS…FFDVNRTLFK (65 aa). The helical transmembrane segment at 437-457 threads the bilayer; it reads GLLTTMVTYLVVLLQFQISIP. Over 458-512 the chain is Extracellular; sequence TDKGDSEGANNITVVDFVMDSLDNDMSLMGASTLSTTTVGTTLPPPIMKLKGRKG. Asn468 carries N-linked (GlcNAc...) asparagine glycosylation.

The protein belongs to the insect chemoreceptor superfamily. Gustatory receptor (GR) family. Gr21a subfamily. In terms of assembly, gr21a and Gr63a probably form a heterodimer that responds to CO(2). As to expression, expressed in the medial aspect of the third antennal segment. Carbon dioxide-responsive neurons coexpress Gr21a and Gr63a in a pair of chemosensory receptors at both larval and adult life stages.

It localises to the cell membrane. In terms of biological role, gustatory and odorant receptor which mediates acceptance or avoidance behavior, depending on its substrates. Gr21a and Gr63a together are sufficient for carbon dioxide detection and avoidance behavior. It is possible that the CO(2) receptors Gr63a and Gr21a activate the TRPC channels through Galpha49B and Plc21C. This innate olfactory avoidance behavior can be inhibited by inhibitory interactions of the odors such as 1-hexanol and 2,3-butanedione with Gr21a and Gr63a. In Drosophila melanogaster (Fruit fly), this protein is Gustatory and odorant receptor 63a (Gr63a).